The sequence spans 234 residues: Lipoprotein-releasing system ATP-binding protein LolD (234 aa).

The region spanning 7 to 234 (LLCNNLCKKY…QDELTVTGAL (228 aa)) is the ABC transporter domain. 43 to 50 (GSSGSGKS) provides a ligand contact to ATP.

It belongs to the ABC transporter superfamily. Lipoprotein translocase (TC 3.A.1.125) family. As to quaternary structure, the complex is composed of two ATP-binding proteins (LolD) and two transmembrane proteins (LolC and LolE).

It localises to the cell inner membrane. Its function is as follows. Part of the ABC transporter complex LolCDE involved in the translocation of mature outer membrane-directed lipoproteins, from the inner membrane to the periplasmic chaperone, LolA. Responsible for the formation of the LolA-lipoprotein complex in an ATP-dependent manner. The chain is Lipoprotein-releasing system ATP-binding protein LolD from Photorhabdus laumondii subsp. laumondii (strain DSM 15139 / CIP 105565 / TT01) (Photorhabdus luminescens subsp. laumondii).